Reading from the N-terminus, the 149-residue chain is Large ribosomal subunit protein bL9 (149 aa).

The protein belongs to the bacterial ribosomal protein bL9 family.

Binds to the 23S rRNA. This is Large ribosomal subunit protein bL9 from Xanthomonas oryzae pv. oryzae (strain MAFF 311018).